A 375-amino-acid polypeptide reads, in one-letter code: 23S rRNA (uracil(747)-C(5))-methyltransferase RlmC (375 aa).

[4Fe-4S] cluster-binding residues include C3, C11, C14, and C87. S-adenosyl-L-methionine-binding residues include Q212, F241, E262, and N307. The active-site Nucleophile is C334.

It belongs to the class I-like SAM-binding methyltransferase superfamily. RNA M5U methyltransferase family. RlmC subfamily.

It catalyses the reaction uridine(747) in 23S rRNA + S-adenosyl-L-methionine = 5-methyluridine(747) in 23S rRNA + S-adenosyl-L-homocysteine + H(+). Functionally, catalyzes the formation of 5-methyl-uridine at position 747 (m5U747) in 23S rRNA. The chain is 23S rRNA (uracil(747)-C(5))-methyltransferase RlmC from Salmonella paratyphi A (strain ATCC 9150 / SARB42).